We begin with the raw amino-acid sequence, 848 residues long: DNA mismatch repair protein MutS (848 aa).

610–617 (GPNMGGKS) provides a ligand contact to ATP.

It belongs to the DNA mismatch repair MutS family.

Its function is as follows. This protein is involved in the repair of mismatches in DNA. It is possible that it carries out the mismatch recognition step. This protein has a weak ATPase activity. This Francisella philomiragia subsp. philomiragia (strain ATCC 25017 / CCUG 19701 / FSC 153 / O#319-036) protein is DNA mismatch repair protein MutS.